The following is a 351-amino-acid chain: C(7)-cyclitol 7-kinase (351 aa).

The protein belongs to the ROK (NagC/XylR) family.

It catalyses the reaction valienone + ATP = valienone 7-phosphate + ADP + H(+). It carries out the reaction validone + ATP = validone 7-phosphate + ADP + H(+). Its function is as follows. Involved in the biosynthesis of the antifungal agent validamycin A. Catalyzes the phosphorylation of valienone and validone to their 7-phosphate derivatives. The chain is C(7)-cyclitol 7-kinase from Streptomyces hygroscopicus subsp. jinggangensis (strain 5008).